The primary structure comprises 319 residues: ATP-dependent 6-phosphofructokinase (319 aa).

An ATP-binding site is contributed by glycine 11. Position 21 to 25 (21 to 25 (RAVVR)) interacts with ADP. Residues 72 to 73 (RC) and 102 to 105 (GDGS) contribute to the ATP site. Aspartate 103 is a Mg(2+) binding site. Residue 125-127 (TID) coordinates substrate. Aspartate 127 functions as the Proton acceptor in the catalytic mechanism. An ADP-binding site is contributed by arginine 154. Residues arginine 162 and 169–171 (MGR) each bind substrate. ADP-binding positions include 185 to 187 (GAE), arginine 211, and 213 to 215 (KKH). Residues glutamate 222, arginine 243, and 249–252 (HVQR) each bind substrate.

This sequence belongs to the phosphofructokinase type A (PFKA) family. ATP-dependent PFK group I subfamily. Prokaryotic clade 'B1' sub-subfamily. As to quaternary structure, homotetramer. Mg(2+) is required as a cofactor.

It is found in the cytoplasm. It catalyses the reaction beta-D-fructose 6-phosphate + ATP = beta-D-fructose 1,6-bisphosphate + ADP + H(+). The protein operates within carbohydrate degradation; glycolysis; D-glyceraldehyde 3-phosphate and glycerone phosphate from D-glucose: step 3/4. Its activity is regulated as follows. Allosterically activated by ADP and other diphosphonucleosides, and allosterically inhibited by phosphoenolpyruvate. In terms of biological role, catalyzes the phosphorylation of D-fructose 6-phosphate to fructose 1,6-bisphosphate by ATP, the first committing step of glycolysis. This Bacillus cereus (strain B4264) protein is ATP-dependent 6-phosphofructokinase.